Here is a 213-residue protein sequence, read N- to C-terminus: MSAFIYNNSNNNNSMRLCVMGDGGVGKTSITIQFISNHFVNCYDPTIEDLYRKQCLIDDQVYMLDILDTAGQDELNAIRNHWIKSCEGFILVYSVTSRSSFDQIQSFLDQIKFLKSEKVPIIMIANKSDLDDERQVTYQEGENFANRFGMSFMEVSAKYKLNIDEVFNQIAQHCVKRRCDHIYINKSIRNKNSIFKKFNQKLNNTFHSICKMI.

Residue G21–T28 coordinates GTP. The Effector region signature appears at Y43–Y51. Residues D68–Q72 and N126–D129 each bind GTP. Residue C210 is modified to Cysteine methyl ester. C210 carries the S-geranylgeranyl cysteine lipid modification. Positions K211 to I213 are cleaved as a propeptide — removed in mature form.

Belongs to the small GTPase superfamily. Ras family.

Its subcellular location is the cell membrane. The catalysed reaction is GTP + H2O = GDP + phosphate + H(+). Its function is as follows. Ras proteins bind GDP/GTP and possess intrinsic GTPase activity. This Dictyostelium discoideum (Social amoeba) protein is Ras-like protein rasU (rasU).